The sequence spans 171 residues: MAGETTITVIGNLTSDPELRFTPSGSAVANFTIASTPRTFDRQSNEWKDGETLFLRASVWREAAENVAESLTKGTRVIVSGRLKSRSYETKEGEKRTVIELEVDEIGPSLRYANAKVNRTQRNNNQGAGNGGGFGNQGAGAQATQQDDPWAANSSASAGSWGNGPDSEPPF.

Residues 1-110 (MAGETTITVI…LEVDEIGPSL (110 aa)) form the SSB domain. Residues 118–127 (NRTQRNNNQG) show a composition bias toward low complexity. The tract at residues 118-171 (NRTQRNNNQGAGNGGGFGNQGAGAQATQQDDPWAANSSASAGSWGNGPDSEPPF) is disordered. Residues 128–138 (AGNGGGFGNQG) show a composition bias toward gly residues. Over residues 139–164 (AGAQATQQDDPWAANSSASAGSWGNG) the composition is skewed to low complexity.

As to quaternary structure, homotetramer.

The sequence is that of Single-stranded DNA-binding protein (ssb) from Paenarthrobacter aurescens (Arthrobacter aurescens).